The chain runs to 37 residues: Dolichyl-diphosphooligosaccharide--protein glycosyltransferase subunit 4 (37 aa).

Residues methionine 1–aspartate 4 are Lumenal-facing. A helical transmembrane segment spans residues valine 5–tyrosine 25. Residues histidine 26–glutamate 37 lie on the Cytoplasmic side of the membrane.

This sequence belongs to the OST4 family. In terms of assembly, component of the oligosaccharyltransferase (OST) complex. OST exists in two different complex forms which contain common core subunits RPN1, RPN2, OST48, OST4, DAD1 and TMEM258, either STT3A or STT3B as catalytic subunits, and form-specific accessory subunits. STT3A complex assembly occurs through the formation of 3 subcomplexes. Subcomplex 1 contains RPN1 and TMEM258, subcomplex 2 contains the STT3A-specific subunits STT3A, DC2/OSTC, and KCP2 as well as the core subunit OST4, and subcomplex 3 contains RPN2, DAD1, and OST48. The STT3A complex can form stable complexes with the Sec61 complex or with both the Sec61 and TRAP complexes.

The protein resides in the endoplasmic reticulum. Its subcellular location is the endoplasmic reticulum membrane. The protein operates within protein modification; protein glycosylation. Subunit of the oligosaccharyl transferase (OST) complex that catalyzes the initial transfer of a defined glycan (Glc(3)Man(9)GlcNAc(2) in eukaryotes) from the lipid carrier dolichol-pyrophosphate to an asparagine residue within an Asn-X-Ser/Thr consensus motif in nascent polypeptide chains, the first step in protein N-glycosylation. N-glycosylation occurs cotranslationally and the complex associates with the Sec61 complex at the channel-forming translocon complex that mediates protein translocation across the endoplasmic reticulum (ER). All subunits are required for a maximal enzyme activity. Specifically involved in maintaining stability of STT3A-containing OST complexes. The chain is Dolichyl-diphosphooligosaccharide--protein glycosyltransferase subunit 4 from Homo sapiens (Human).